The following is a 274-amino-acid chain: Large ribosomal subunit protein uL2 (274 aa).

2 disordered regions span residues Ala-28–Gly-55 and Val-224–Lys-274. The segment covering Lys-263–Lys-274 has biased composition (basic and acidic residues).

It belongs to the universal ribosomal protein uL2 family. In terms of assembly, part of the 50S ribosomal subunit. Forms a bridge to the 30S subunit in the 70S ribosome.

In terms of biological role, one of the primary rRNA binding proteins. Required for association of the 30S and 50S subunits to form the 70S ribosome, for tRNA binding and peptide bond formation. It has been suggested to have peptidyltransferase activity; this is somewhat controversial. Makes several contacts with the 16S rRNA in the 70S ribosome. This chain is Large ribosomal subunit protein uL2, found in Pseudomonas fluorescens (strain ATCC BAA-477 / NRRL B-23932 / Pf-5).